A 346-amino-acid chain; its full sequence is Protein RecA (346 aa).

An ATP-binding site is contributed by glycine 65 to threonine 72.

Belongs to the RecA family.

The protein localises to the cytoplasm. Can catalyze the hydrolysis of ATP in the presence of single-stranded DNA, the ATP-dependent uptake of single-stranded DNA by duplex DNA, and the ATP-dependent hybridization of homologous single-stranded DNAs. It interacts with LexA causing its activation and leading to its autocatalytic cleavage. The polypeptide is Protein RecA (Pseudomonas aeruginosa (strain UCBPP-PA14)).